The primary structure comprises 141 residues: Putative nickel-responsive regulator (141 aa).

4 residues coordinate Ni(2+): histidine 80, histidine 91, histidine 93, and cysteine 99.

Belongs to the transcriptional regulatory CopG/NikR family. Ni(2+) serves as cofactor.

Transcriptional regulator. The sequence is that of Putative nickel-responsive regulator from Methanococcus maripaludis (strain C6 / ATCC BAA-1332).